We begin with the raw amino-acid sequence, 300 residues long: MAETETNPLVVFATVATIIISFVTLYFFKQSAKSSTTSSSSSSSSKSKKGSPALIPDKFQKFPLISKTQVSHNSAIYRFGLPNPTDTLNLPIGQHISIGTIIDGKEVVRSYTPISLGDQQGHFDLLIKTYENGNISRHVAEKQVGDFVEIRGPKGFFTYTPNMKKSLGLIAGGTGIAPMYQIITAIMNNPEDKTKVHLLYANVTENDILLRDELEQYAKEHPDRLKIHHVLNEAPEGWQHLTGFVTPELIDKHLPKPSADTNLLLCGPPPMISAMKKAAVSLGFDKAKPVSKLGDQVFVF.

Residues 8 to 28 form a helical membrane-spanning segment; that stretch reads PLVVFATVATIIISFVTLYFF. Over residues 34–45 the composition is skewed to low complexity; sequence SSTTSSSSSSSS. The segment at 34–54 is disordered; sequence SSTTSSSSSSSSKSKKGSPAL. In terms of domain architecture, FAD-binding FR-type spans 57 to 160; the sequence is DKFQKFPLIS…RGPKGFFTYT (104 aa). Residues 140–155 and 166–198 each bind FAD; these read AEKQ…GPKG and SLGL…KVHL.

It belongs to the flavoprotein pyridine nucleotide cytochrome reductase family. Monomer. Component of the 2-(3-amino-3-carboxypropyl)histidine synthase complex composed of DPH1, DPH2, DPH3 and a NADH-dependent reductase, predominantly CBR1. It depends on FAD as a cofactor.

It is found in the mitochondrion outer membrane. The enzyme catalyses 2 Fe(III)-[cytochrome b5] + NADH = 2 Fe(II)-[cytochrome b5] + NAD(+) + H(+). It catalyses the reaction 2 Fe(3+)-[Dph3] + NADH = 2 Fe(2+)-[Dph3] + NAD(+) + H(+). Its pathway is protein modification; peptidyl-diphthamide biosynthesis. Its function is as follows. NADH-dependent reductase for DPH3 and cytochrome b5. Required for the first step of diphthamide biosynthesis, a post-translational modification of histidine which occurs in elongation factor 2. DPH1 and DPH2 transfer a 3-amino-3-carboxypropyl (ACP) group from S-adenosyl-L-methionine (SAM) to a histidine residue, the reaction is assisted by a reduction system comprising DPH3 and a NADH-dependent reductase, predominantly CBR1. By reducing DPH3, also involved in the formation of the tRNA wobble base modification mcm5s 2U (5-methoxycarbonylmethyl-2-thiouridine), mediated by the elongator complex. The cytochrome b5/NADH cytochrome b5 reductase electron transfer system supports the catalytic activity of several sterol biosynthetic enzymes. The chain is NADH-cytochrome b5 reductase 1 (CBR1) from Lodderomyces elongisporus (strain ATCC 11503 / CBS 2605 / JCM 1781 / NBRC 1676 / NRRL YB-4239) (Yeast).